We begin with the raw amino-acid sequence, 1077 residues long: Deoxyribonuclease CdiA (1077 aa).

Positions 67-384 are FHA-2; the sequence is IGTSRQKTTD…DRDNYDAKQS (318 aa). Residues 531–546 are compositionally biased toward polar residues; that stretch reads QQNVDDLSRDTGNANG. Positions 531–555 are disordered; that stretch reads QQNVDDLSRDTGNANGSIGPIFDKE. The VENN CT cleavage motif signature appears at 781–784; it reads VENN. The tract at residues 954–1077 is DNase activity; sequence MPWEDYVGKT…GVKVTVTQVK (124 aa).

Interacts with cognate immunity protein CdiI-YPIII, which blocks its toxic DNase activity. The cofactor is Zn(2+).

It localises to the target cell. The protein resides in the target cell cytoplasm. Toxic component of a toxin-immunity protein module, which functions as a cellular contact-dependent growth inhibition (CDI) system. CDI modules allow bacteria to communicate with and inhibit the growth of closely related neighboring bacteria in a contact-dependent fashion. The C-terminal 123 residues (954-1077) has DNase activity in the presence of Zn(2+), converting supercoiled DNA into open-circular form. Toxic activity is neutralized by coexpression of the cognate immunity protein CdiI-YPIII, but not by non-cognate immunity proteins from other toxin-immunity modules. Expression of the DNase domain as a chimera allows bacteria to attack other non-immune bacteria which become filamentous and have lost DNA staining. In terms of biological role, the CdiA protein is thought to be exported from the cell through the central lumen of CdiB, the other half of its two-partner system (TPS). The TPS domain probably remains associated with CdiB while the FHA-1 domain forms an extended filament with the receptor-binding domain (RBD) at its extremity; in the secretion arrested state the C-terminus of the RBD and YP domains form a hairpin-like structure as the FHA-2, PT and CT domains are periplasmic. The YP domain is probably responsible for this arrest at the point where it re-enters the host cell periplasm. Upon binding to a target cell outer membrane receptor a signal is transmitted to activate secretion. The filament elongates slightly, the rest of CdiA is secreted and the FHA-2 domain becomes stably associated with the target cell's outer membrane where it facilitates entry of the toxic CT domain into the target cell periplasm. From there the toxic CT domain is cleaved and gains access to the target cell cytoplasm via an inner membrane protein. This chain is Deoxyribonuclease CdiA, found in Yersinia pseudotuberculosis serotype O:3 (strain YPIII).